The following is a 1064-amino-acid chain: Valine--tRNA ligase, mitochondrial (1064 aa).

Residues 1 to 26 (MPHLPLASFRPPFWGLRHSRGLPRFH) constitute a mitochondrion transit peptide. Positions 25 to 65 (FHSVSTQSEPHGSPISRRNREAKQKRLREKQATLETDIAGE) are disordered. A compositionally biased stretch (basic and acidic residues) spans 42–56 (RNREAKQKRLREKQA). Residues 146–156 (PNVTGSLHIGH) carry the 'HIGH' region motif. The 'KMSKS' region signature appears at 659 to 663 (KMSKS). Residue Lys662 participates in ATP binding.

Belongs to the class-I aminoacyl-tRNA synthetase family.

The protein resides in the mitochondrion. It carries out the reaction tRNA(Val) + L-valine + ATP = L-valyl-tRNA(Val) + AMP + diphosphate. In terms of biological role, catalyzes the attachment of valine to tRNA(Val) in a two-step reaction: valine is first activated by ATP to form Val-AMP and then transferred to the acceptor end of tRNA(Val). This is Valine--tRNA ligase, mitochondrial (VARS2) from Macaca mulatta (Rhesus macaque).